Reading from the N-terminus, the 175-residue chain is MIFLMTKDSFLLQGFWQLKDNHEMIKINSLSEIKKVGNKPFKVIIDTYHNHILDEEAIKFLEKLDAERIIVLAPYHISKLKAKAPIYFVSRKESIKNLLEITYGKHLPHKNSQLCFSHNQFKIMQLILKNKNESNITSTLNISQQTLKIQKFNIMYKLKLRRMSDIVTLGITSYF.

One can recognise an HTH luxR-type domain in the interval 109–174 (HKNSQLCFSH…DIVTLGITSY (66 aa)). A DNA-binding region (H-T-H motif) is located at residues 133-152 (ESNITSTLNISQQTLKIQKF).

Its function is as follows. Regulates the expression of several genes involved in acid resistance. Required for the expression of gadA and gadBC, among others, regardless of media or growth conditions. Binds directly to the 20 bp GAD box found in the control regions of both loci. Could be involved in the regulation of the genes coding for the type III secretion system in enterohaemorragic strains. In Escherichia coli O157:H7, this protein is Transcriptional regulator GadE (gadE).